The sequence spans 313 residues: MIREPYFHQFALAELLPFFEQFPTQYLSGKRNIKLAYRHLIQPESAVRKLMILVNGRAENMLKWSELAYDFYHQGYDVLLFDHRGQGYSQRIIPQKGHLDEFRFYVDDMAKIIEKVTALFSYSTQHLLAHSMGALIATYYLANYDHHINKAVLSSPFYGILLKHPIRDELIITLMNILGQGERYVFGKGAYQQAHLEYNELTFCKTRMKWMNRINRKNPAINLGGPTFRWVHLCLNAIKRLPKVIPKIEIPILILQAEKEKIVDNKNLEKLTALFPNARCEVILNAKHEVLFEKDNVRRNVLKSVNHFLNVQS.

The protein resides in the cell inner membrane. The enzyme catalyses a 1-acyl-sn-glycero-3-phosphocholine + H2O = sn-glycerol 3-phosphocholine + a fatty acid + H(+). In Haemophilus influenzae (strain ATCC 51907 / DSM 11121 / KW20 / Rd), this protein is Probable lysophospholipase L2 (pldB).